Reading from the N-terminus, the 280-residue chain is Cell division protein SepF (280 aa).

The interval 22–117 (DYVDDRAPRA…DDYPEDAYGE (96 aa)) is disordered. Composition is skewed to basic and acidic residues over residues 25 to 36 (DDRAPRASERGG) and 53 to 83 (RYGE…GADR).

Belongs to the SepF family. As to quaternary structure, homodimer. Interacts with FtsZ.

The protein resides in the cytoplasm. Its function is as follows. Cell division protein that is part of the divisome complex and is recruited early to the Z-ring. Probably stimulates Z-ring formation, perhaps through the cross-linking of FtsZ protofilaments. Its function overlaps with FtsA. This is Cell division protein SepF from Nocardia farcinica (strain IFM 10152).